The primary structure comprises 354 residues: MTALKNDRFLRALLKQPVDVTPVWMMRQAGRYLPEYRASRASAGDFMSLCKNPQFACEVTLQPLDRYPLDAAILFSDILTIPDAMGLGLYFETGEGPRFKKTVSTLADIEALPIPDAQKDLGYVMDAVSTIRRELNGRVPLIGFAGSPWTLATYMVEGGSSKDFRKSKAMLYDNPQAMHLLLDKLAQSVTAYLNGQILAGAQAVQIFDSWGGSLSSAAYQEFSLAYMRKIVNGLIREHDGRKVPVIVFTKGGGLWLESIADIGADTLGLDWTCDIGEARQRVGSKVSLQGNMDPTVLYARPEAIRQEVARILASYGSGTGHVFNLGHGITPEVDPANAGAFINAIHELSAQYHQ.

Residues 27–31 (RQAGR), Asp77, Tyr154, Ser209, and His327 contribute to the substrate site.

The protein belongs to the uroporphyrinogen decarboxylase family. As to quaternary structure, homodimer.

It localises to the cytoplasm. It carries out the reaction uroporphyrinogen III + 4 H(+) = coproporphyrinogen III + 4 CO2. Its pathway is porphyrin-containing compound metabolism; protoporphyrin-IX biosynthesis; coproporphyrinogen-III from 5-aminolevulinate: step 4/4. Its function is as follows. Catalyzes the decarboxylation of four acetate groups of uroporphyrinogen-III to yield coproporphyrinogen-III. In Pseudomonas savastanoi pv. phaseolicola (strain 1448A / Race 6) (Pseudomonas syringae pv. phaseolicola (strain 1448A / Race 6)), this protein is Uroporphyrinogen decarboxylase.